We begin with the raw amino-acid sequence, 461 residues long: E3 ubiquitin-protein ligase TRIM15 (461 aa).

Residues 12 to 57 (CSDCQGRLEDAVTAACGHTFCRLCLPLPPQMGAQPSSRVLLCPVCQ) form an RING-type zinc finger. The segment at 74 to 115 (LGETYCEEHGEKIYFFCENDAEFLCVFCREGPSHQAHAVGFL) adopts a B box-type zinc-finger fold. 4 residues coordinate Zn(2+): Cys79, His82, Cys101, and His107. Positions 123–230 (RDRLRGRLEA…EKCQQPASEL (108 aa)) form a coiled coil. The region spanning 272-461 (EMLRAFSENL…KKGSCLTLKG (190 aa)) is the B30.2/SPRY domain.

It belongs to the TRIM/RBCC family. Interacts with paxillin/PXN; this interaction recruits TRIM15 to focal adhesions. Interacts with TRIM8; this interaction prevents TRIM8 cytoplasmic translocation.

The protein localises to the cytoplasm. It localises to the nucleus. It is found in the cell junction. The protein resides in the focal adhesion. The catalysed reaction is S-ubiquitinyl-[E2 ubiquitin-conjugating enzyme]-L-cysteine + [acceptor protein]-L-lysine = [E2 ubiquitin-conjugating enzyme]-L-cysteine + N(6)-ubiquitinyl-[acceptor protein]-L-lysine.. Its function is as follows. E3 ubiquitin ligase that plays a role in several processes including innate antiviral immnity, cell migration and chemotaxis. Acts as a 'Lys-63'-specific ubiquitin ligase for MAPK1/ERK2 and MAPK3/ERK1, promoting their activation by facilitating their interaction with MAP2K1 and MAP2K2. Also plays a role in cell migration and chemotaxis by acting as a stable focal adhesion component upon recruitment by multi-adapter protein paxillin/PXN. Functions in the RIGI-mediated interferon induction pathway upstream or at the level of MAVS. Inhibits NF-kappa-B activation by turnover of 'Lys-63'-linked ubiquitination of MAP3K7/TAK1. Mechanistically, prevents TRIM8 cytoplasmic translocation and thus inhibits TRIM8-mediated 'Lys-63'-linked polyubiquitination of MAP3K7/TAK1 in the cytoplasm. Also has an important regulatory effect on the activation of hepatic stellate cells (HSCs). The chain is E3 ubiquitin-protein ligase TRIM15 (TRIM15) from Sus scrofa (Pig).